The following is a 406-amino-acid chain: COP9 signalosome complex subunit 4 (406 aa).

Ala2 is modified (N-acetylalanine). N6-acetyllysine is present on Lys25. The PCI domain maps to 197–366; sequence YRRKFIEAAQ…GIVHFETREA (170 aa).

It belongs to the CSN4 family. In terms of assembly, component of the CSN complex, composed of COPS1/GPS1, COPS2, COPS3, COPS4, COPS5, COPS6, COPS7 (COPS7A or COPS7B), COPS8 and COPS9. In the complex, it probably interacts directly with COPS1, COPS2, COPS3, COPS5, COPS6, COPS7 (COPS7A or COPS7B) and COPS8. Interacts with TOR1A; the interaction is direct and associates TOR1A and SNAPIN with the CSN complex. Interacts with STON2; controls STON2 neddylation levels. Interacts with ERCC6.

The protein localises to the cytoplasm. It is found in the nucleus. Its subcellular location is the cytoplasmic vesicle. The protein resides in the secretory vesicle. It localises to the synaptic vesicle. Component of the COP9 signalosome complex (CSN), a complex involved in various cellular and developmental processes. The CSN complex is an essential regulator of the ubiquitin (Ubl) conjugation pathway by mediating the deneddylation of the cullin subunits of SCF-type E3 ligase complexes, leading to decrease the Ubl ligase activity of SCF-type complexes such as SCF, CSA or DDB2. Also involved in the deneddylation of non-cullin subunits such as STON2. The complex is also involved in phosphorylation of p53/TP53, c-jun/JUN, IkappaBalpha/NFKBIA, ITPK1, IRF8/ICSBP and SNAPIN, possibly via its association with CK2 and PKD kinases. CSN-dependent phosphorylation of TP53 and JUN promotes and protects degradation by the Ubl system, respectively. This chain is COP9 signalosome complex subunit 4 (Cops4), found in Rattus norvegicus (Rat).